The following is a 120-amino-acid chain: MLIGILSKKYVKEILELLNEKGELHFSQIHKEIPTHMSSLNRTLNELVKLGLISKRKEDNKQALPKTYYKLTPLGKKALLLYEVEKIIENSKNNQNIIIQIINGKNHNIINAKIVNIHNK.

This sequence to M.jannaschii MJ0361.

This is an uncharacterized protein from Methanocaldococcus jannaschii (strain ATCC 43067 / DSM 2661 / JAL-1 / JCM 10045 / NBRC 100440) (Methanococcus jannaschii).